A 618-amino-acid chain; its full sequence is Serine/threonine-protein kinase pkn1 (618 aa).

The 367-residue stretch at 15 to 381 folds into the Protein kinase domain; it reads YKILCYLRKG…KEEVKPQPLF (367 aa). ATP contacts are provided by residues 21 to 29 and lysine 44; that span reads LRKGLWCQD.

Belongs to the protein kinase superfamily. Ser/Thr protein kinase family. Autophosphorylated on serine and threonine residues.

It carries out the reaction L-seryl-[protein] + ATP = O-phospho-L-seryl-[protein] + ADP + H(+). The enzyme catalyses L-threonyl-[protein] + ATP = O-phospho-L-threonyl-[protein] + ADP + H(+). Its function is as follows. Together with the serine/threonine kinase PknD, may play a role in the specific interactions with host proteins during intracellular growth. The sequence is that of Serine/threonine-protein kinase pkn1 (pkn1) from Chlamydia caviae (strain ATCC VR-813 / DSM 19441 / 03DC25 / GPIC) (Chlamydophila caviae).